A 341-amino-acid polypeptide reads, in one-letter code: Alanine racemase (341 aa).

Residue Lys-33 is the Proton acceptor; specific for D-alanine of the active site. Position 33 is an N6-(pyridoxal phosphate)lysine (Lys-33). Arg-126 contacts substrate. The active-site Proton acceptor; specific for L-alanine is Tyr-236. Met-284 serves as a coordination point for substrate.

It belongs to the alanine racemase family. The cofactor is pyridoxal 5'-phosphate.

It carries out the reaction L-alanine = D-alanine. It functions in the pathway amino-acid biosynthesis; D-alanine biosynthesis; D-alanine from L-alanine: step 1/1. In terms of biological role, catalyzes the interconversion of L-alanine and D-alanine. In Aquifex pyrophilus, this protein is Alanine racemase (alr).